Here is a 283-residue protein sequence, read N- to C-terminus: 2-dehydro-3-deoxyphosphooctonate aldolase (283 aa).

This sequence belongs to the KdsA family.

Its subcellular location is the cytoplasm. It catalyses the reaction D-arabinose 5-phosphate + phosphoenolpyruvate + H2O = 3-deoxy-alpha-D-manno-2-octulosonate-8-phosphate + phosphate. Its pathway is carbohydrate biosynthesis; 3-deoxy-D-manno-octulosonate biosynthesis; 3-deoxy-D-manno-octulosonate from D-ribulose 5-phosphate: step 2/3. The protein operates within bacterial outer membrane biogenesis; lipopolysaccharide biosynthesis. The chain is 2-dehydro-3-deoxyphosphooctonate aldolase from Vibrio parahaemolyticus serotype O3:K6 (strain RIMD 2210633).